We begin with the raw amino-acid sequence, 156 residues long: Large ribosomal subunit protein uL15 (156 aa).

The tract at residues 25-49 (RGIGCGKGKTSGRGHKGQKARSGTS) is disordered. Positions 34-43 (TSGRGHKGQK) are enriched in basic residues.

The protein belongs to the universal ribosomal protein uL15 family. In terms of assembly, part of the 50S ribosomal subunit.

In terms of biological role, binds to the 23S rRNA. The sequence is that of Large ribosomal subunit protein uL15 from Wolbachia sp. subsp. Brugia malayi (strain TRS).